Reading from the N-terminus, the 309-residue chain is Porphobilinogen deaminase (309 aa).

Cysteine 241 is modified (S-(dipyrrolylmethanemethyl)cysteine).

Belongs to the HMBS family. Monomer. The cofactor is dipyrromethane.

The enzyme catalyses 4 porphobilinogen + H2O = hydroxymethylbilane + 4 NH4(+). It participates in porphyrin-containing compound metabolism; protoporphyrin-IX biosynthesis; coproporphyrinogen-III from 5-aminolevulinate: step 2/4. Functionally, tetrapolymerization of the monopyrrole PBG into the hydroxymethylbilane pre-uroporphyrinogen in several discrete steps. In Bacillus cereus (strain ZK / E33L), this protein is Porphobilinogen deaminase.